Reading from the N-terminus, the 380-residue chain is Protein neprosin (380 aa).

The first 24 residues, 1-24, serve as a signal peptide directing secretion; the sequence is MQAKFFTFVILSSVFYFNYPLAEA. The propeptide at 25–128 is activation peptide; that stretch reads RSIQARLANK…QFPNLKFAPP (104 aa). Cys-52 and Cys-98 are oxidised to a cystine. Asn-68, Asn-145, and Asn-152 each carry an N-linked (GlcNAc...) asparagine glycan. The Neprosin PEP catalytic domain occupies 129–380; it reads SANTNHQYAV…YLFYGGPGCQ (252 aa). Glu-188 is a catalytic residue. Residues Cys-219 and Cys-224 are joined by a disulfide bond. Residue Asn-253 is glycosylated (N-linked (GlcNAc...) asparagine). Glu-297 is a catalytic residue. Cys-358 and Cys-379 are oxidised to a cystine.

It belongs to the peptidase G3 family.

The protein localises to the secreted. The enzyme catalyses Hydrolysis of Pro-|-Xaa &gt;&gt; Ala-|-Xaa in oligopeptides.. With respect to regulation, weakly inhibited by the aspartic protease inhibitor pepstatin. Weakly inhibited by pepstatin A (IC(50) of 140 uM) and 1,2-epoxy-3-(p-nitrophenoxy)propane (EPNP) (IC(50) of 480 uM). Activity is not affected by the POP inhibitor Z-Pro-prolinal inhibitor or the denaturant urea. Functionally, glutamic endopeptidase that preferentially cleaves peptide bonds on the C-terminal side of proline residues. Also cleaves peptide bonds on the C-terminal side of alanine residues but with less efficiency. In contrast to most proline-cleaving enzymes, effectively degrades proteins of any size. Found in the viscoelastic fluid of the pitcher, and so likely functions in the digestion of their prey. In Nepenthes x ventrata (Red tropical pitcher plant), this protein is Protein neprosin.